A 207-amino-acid polypeptide reads, in one-letter code: Large ribosomal subunit protein uL4 (207 aa).

The interval 55-76 (ALVSGGGKKPWRQKGTGRARHG) is disordered. The span at 63–76 (KPWRQKGTGRARHG) shows a compositional bias: basic residues.

Belongs to the universal ribosomal protein uL4 family. As to quaternary structure, part of the 50S ribosomal subunit.

Its function is as follows. One of the primary rRNA binding proteins, this protein initially binds near the 5'-end of the 23S rRNA. It is important during the early stages of 50S assembly. It makes multiple contacts with different domains of the 23S rRNA in the assembled 50S subunit and ribosome. In terms of biological role, forms part of the polypeptide exit tunnel. The polypeptide is Large ribosomal subunit protein uL4 (Phytoplasma mali (strain AT)).